The primary structure comprises 1193 residues: Falcilysin (1193 aa).

His-129 lines the Zn(2+) pocket. The active-site Proton acceptor is the Glu-132. Zn(2+) is bound by residues His-133 and Glu-243. The tract at residues 376–404 (DKTNNHNNNHSNNQSSENNGYSNGSHSSD) is disordered. A compositionally biased stretch (low complexity) spans 380–394 (NHNNNHSNNQSSENN). The segment covering 395–404 (GYSNGSHSSD) has biased composition (polar residues). The stretch at 583-619 (LLEGDENYAQEQENLEKQELKKRIENFNEQEKEQVIK) forms a coiled coil.

It belongs to the peptidase M16 family. Monomer. Component of the hemozoin formation complex (HFC) composed of falcipains FP2A and/or FP2B, plasmepsins PMII, PMIII/HAP and PMIV, heme detoxifying protein HDP and falcilysin FLN. The HFC complex is involved in hemoglobin degradation and detoxification of heme in the food vacuole during the asexual blood stage. Zn(2+) serves as cofactor. In terms of processing, does not require processing for targeting to the food vacuole or maturation.

It localises to the vacuole membrane. Its subcellular location is the plastid. It is found in the apicoplast. The protein localises to the vesicle. Functionally, in the food vacuole, acts downstream of proteases plasmepsins PMI and PMII and falcipains during the catabolism of host hemoglobin by cleaving peptide fragments of alpha and beta hemoglobin subunits generated by PMI and PMII and falcipains. In the apicoplast, degrades apicoplast transit peptides after their cleavage. Prefers bulky hydrophobic amino acids in the P1' position at both acidic and neutral pH. At P2', prefers hydrophobic residues at acidic pH; at neutral pH, these same residues are abundant but prefers Arg. At P3', prefers hydrophobic residues, especially Met, at both pH conditions. At P4' and P5', prefers acidic residues at acidic pH, however, at neutral pH, the enzyme is less selective at these positions. The optimal site cleavage at acidic pH is YNEHS-|-FFMEE and, at neutral pH, MKRHS-|-FRMRG. This is Falcilysin from Plasmodium falciparum (isolate 3D7).